Consider the following 425-residue polypeptide: Pyruvate dehydrogenase E1 component subunit alpha-3, chloroplastic (425 aa).

The transit peptide at 1–66 (MAAASSFTAA…VLPGNKAAPA (66 aa)) directs the protein to the chloroplast. 8 residues coordinate pyruvate: histidine 109, tyrosine 135, arginine 136, alanine 184, isoleucine 186, aspartate 224, glycine 225, and asparagine 253. 8 residues coordinate thiamine diphosphate: tyrosine 135, arginine 136, alanine 184, isoleucine 186, aspartate 224, glycine 225, asparagine 253, and histidine 322. Residue aspartate 224 coordinates Mg(2+). Asparagine 253 contacts Mg(2+).

In terms of assembly, tetramer of 2 alpha and 2 beta subunits. Thiamine diphosphate is required as a cofactor. It depends on Mg(2+) as a cofactor.

Its subcellular location is the plastid. The protein localises to the chloroplast. It catalyses the reaction N(6)-[(R)-lipoyl]-L-lysyl-[protein] + pyruvate + H(+) = N(6)-[(R)-S(8)-acetyldihydrolipoyl]-L-lysyl-[protein] + CO2. Its function is as follows. The pyruvate dehydrogenase complex catalyzes the overall conversion of pyruvate to acetyl-CoA and CO(2). It contains multiple copies of three enzymatic components: pyruvate dehydrogenase (E1), dihydrolipoamide acetyltransferase (E2) and lipoamide dehydrogenase (E3). This chain is Pyruvate dehydrogenase E1 component subunit alpha-3, chloroplastic, found in Oryza sativa subsp. japonica (Rice).